The sequence spans 889 residues: Alanine--tRNA ligase (889 aa).

Positions 574, 578, 676, and 680 each coordinate Zn(2+).

The protein belongs to the class-II aminoacyl-tRNA synthetase family. Requires Zn(2+) as cofactor.

It localises to the cytoplasm. It catalyses the reaction tRNA(Ala) + L-alanine + ATP = L-alanyl-tRNA(Ala) + AMP + diphosphate. Functionally, catalyzes the attachment of alanine to tRNA(Ala) in a two-step reaction: alanine is first activated by ATP to form Ala-AMP and then transferred to the acceptor end of tRNA(Ala). Also edits incorrectly charged Ser-tRNA(Ala) and Gly-tRNA(Ala) via its editing domain. This Thermobifida fusca (strain YX) protein is Alanine--tRNA ligase.